The following is a 1167-amino-acid chain: Pesticidal crystal protein Cry1Ja (1167 aa).

This sequence belongs to the delta endotoxin family.

In terms of biological role, promotes colloidosmotic lysis by binding to the midgut epithelial cells of many lepidopteran larvae. In Bacillus thuringiensis, this protein is Pesticidal crystal protein Cry1Ja (cry1Ja).